Reading from the N-terminus, the 613-residue chain is Dihydroxy-acid dehydratase (613 aa).

Residue aspartate 81 coordinates Mg(2+). Cysteine 122 contacts [2Fe-2S] cluster. 2 residues coordinate Mg(2+): aspartate 123 and lysine 124. Residue lysine 124 is modified to N6-carboxylysine. Position 193 (cysteine 193) interacts with [2Fe-2S] cluster. Residue glutamate 489 participates in Mg(2+) binding. Serine 515 acts as the Proton acceptor in catalysis.

The protein belongs to the IlvD/Edd family. Homodimer. [2Fe-2S] cluster is required as a cofactor. Mg(2+) serves as cofactor.

The enzyme catalyses (2R)-2,3-dihydroxy-3-methylbutanoate = 3-methyl-2-oxobutanoate + H2O. The catalysed reaction is (2R,3R)-2,3-dihydroxy-3-methylpentanoate = (S)-3-methyl-2-oxopentanoate + H2O. The protein operates within amino-acid biosynthesis; L-isoleucine biosynthesis; L-isoleucine from 2-oxobutanoate: step 3/4. It functions in the pathway amino-acid biosynthesis; L-valine biosynthesis; L-valine from pyruvate: step 3/4. In terms of biological role, functions in the biosynthesis of branched-chain amino acids. Catalyzes the dehydration of (2R,3R)-2,3-dihydroxy-3-methylpentanoate (2,3-dihydroxy-3-methylvalerate) into 2-oxo-3-methylpentanoate (2-oxo-3-methylvalerate) and of (2R)-2,3-dihydroxy-3-methylbutanoate (2,3-dihydroxyisovalerate) into 2-oxo-3-methylbutanoate (2-oxoisovalerate), the penultimate precursor to L-isoleucine and L-valine, respectively. The chain is Dihydroxy-acid dehydratase from Pseudomonas putida (strain GB-1).